The primary structure comprises 176 residues: MTTILSVRLNKQVVIGGDGQATLGNTIIKSNVKKVRTLYNNKVIAGFAGGTADAFTLFELFEKKLLMYQGQLQRSAIELAKDWRTDKILRKLEALLAVADKETSLIVTGNGDVIQPENNLMAIGSGGSYAQAAAIAMIENTSLTAKQIVEKALKITSGICIYTNNIFTIKELTSEK.

Thr2 is a catalytic residue. Residues Ser157, Cys160, and Thr163 each contribute to the Na(+) site.

This sequence belongs to the peptidase T1B family. HslV subfamily. A double ring-shaped homohexamer of HslV is capped on each side by a ring-shaped HslU homohexamer. The assembly of the HslU/HslV complex is dependent on binding of ATP.

Its subcellular location is the cytoplasm. It carries out the reaction ATP-dependent cleavage of peptide bonds with broad specificity.. Its activity is regulated as follows. Allosterically activated by HslU binding. In terms of biological role, protease subunit of a proteasome-like degradation complex believed to be a general protein degrading machinery. In Buchnera aphidicola subsp. Baizongia pistaciae (strain Bp), this protein is ATP-dependent protease subunit HslV.